Reading from the N-terminus, the 373-residue chain is Anhydro-N-acetylmuramic acid kinase (373 aa).

12-19 (GTSLDGVD) serves as a coordination point for ATP.

Belongs to the anhydro-N-acetylmuramic acid kinase family.

The catalysed reaction is 1,6-anhydro-N-acetyl-beta-muramate + ATP + H2O = N-acetyl-D-muramate 6-phosphate + ADP + H(+). Its pathway is amino-sugar metabolism; 1,6-anhydro-N-acetylmuramate degradation. It participates in cell wall biogenesis; peptidoglycan recycling. Catalyzes the specific phosphorylation of 1,6-anhydro-N-acetylmuramic acid (anhMurNAc) with the simultaneous cleavage of the 1,6-anhydro ring, generating MurNAc-6-P. Is required for the utilization of anhMurNAc either imported from the medium or derived from its own cell wall murein, and thus plays a role in cell wall recycling. In Salmonella gallinarum (strain 287/91 / NCTC 13346), this protein is Anhydro-N-acetylmuramic acid kinase.